The sequence spans 292 residues: Ribosomal protein L11 methyltransferase (292 aa).

S-adenosyl-L-methionine-binding residues include threonine 136, glycine 159, aspartate 181, and asparagine 228.

The protein belongs to the methyltransferase superfamily. PrmA family.

It localises to the cytoplasm. It carries out the reaction L-lysyl-[protein] + 3 S-adenosyl-L-methionine = N(6),N(6),N(6)-trimethyl-L-lysyl-[protein] + 3 S-adenosyl-L-homocysteine + 3 H(+). Methylates ribosomal protein L11. The chain is Ribosomal protein L11 methyltransferase from Rhizobium johnstonii (strain DSM 114642 / LMG 32736 / 3841) (Rhizobium leguminosarum bv. viciae).